We begin with the raw amino-acid sequence, 589 residues long: Putative adenine deaminase BC_3012 (589 aa).

The protein belongs to the metallo-dependent hydrolases superfamily. Adenine deaminase family.

It carries out the reaction adenine + H2O + H(+) = hypoxanthine + NH4(+). This chain is Putative adenine deaminase BC_3012, found in Bacillus cereus (strain ATCC 14579 / DSM 31 / CCUG 7414 / JCM 2152 / NBRC 15305 / NCIMB 9373 / NCTC 2599 / NRRL B-3711).